The sequence spans 403 residues: Ribosomal RNA large subunit methyltransferase I (403 aa).

The PUA domain occupies 9-88 (YPRLVLSKGR…ESIDIAFFTR (80 aa)).

It belongs to the methyltransferase superfamily. RlmI family.

It localises to the cytoplasm. It catalyses the reaction cytidine(1962) in 23S rRNA + S-adenosyl-L-methionine = 5-methylcytidine(1962) in 23S rRNA + S-adenosyl-L-homocysteine + H(+). Specifically methylates the cytosine at position 1962 (m5C1962) of 23S rRNA. In Salmonella choleraesuis (strain SC-B67), this protein is Ribosomal RNA large subunit methyltransferase I.